Consider the following 461-residue polypeptide: Interleukin-1 receptor-associated kinase 4 (461 aa).

M1 is subject to N-acetylmethionine. The Death domain maps to 20–104; the sequence is RKLSDFIDPQ…APASLLLPDA (85 aa). At K34 the chain carries N6-acetyllysine. A Protein kinase domain is found at 187–455; that stretch reads SVGGNKMGEG…PDIKKVQQLL (269 aa). Residues 193–201 and K214 each bind ATP; that span reads MGEGGFGVV. D312 functions as the Proton acceptor in the catalytic mechanism. ATP-binding positions include 314 to 317 and D330; that span reads KSAN. Phosphothreonine occurs at positions 343 and 346. A Phosphoserine modification is found at S347.

It belongs to the protein kinase superfamily. TKL Ser/Thr protein kinase family. Pelle subfamily. In terms of assembly, associates with MYD88 and IRAK2 to form a ternary complex called the Myddosome. Once phosphorylated, IRAK4 dissociates from the receptor complex and then associates with the TNF receptor-associated factor 6 (TRAF6), IRAK1, and PELI1; this intermediate complex is required for subsequent NF-kappa-B activation. Direct binding of SMAD6 to PELI1 prevents complex formation and hence negatively regulates IL1R-TLR signaling and eventually NF-kappa-B-mediated gene expression. Interacts with IL1RL1. Interacts (when phosphorylated) with IRAK1. May interact (when phosphorylated) with IRAK3. The cofactor is Mg(2+). Post-translationally, phosphorylated.

It is found in the cytoplasm. It carries out the reaction L-seryl-[protein] + ATP = O-phospho-L-seryl-[protein] + ADP + H(+). The catalysed reaction is L-threonyl-[protein] + ATP = O-phospho-L-threonyl-[protein] + ADP + H(+). Its function is as follows. Serine/threonine-protein kinase that plays a critical role in initiating innate immune response against foreign pathogens. Involved in Toll-like receptor (TLR) and IL-1R signaling pathways. Is rapidly recruited by MYD88 to the receptor-signaling complex upon TLR activation to form the Myddosome together with IRAK2. Phosphorylates initially IRAK1, thus stimulating the kinase activity and intensive autophosphorylation of IRAK1. Phosphorylates E3 ubiquitin ligases Pellino proteins (PELI1, PELI2 and PELI3) to promote pellino-mediated polyubiquitination of IRAK1. Then, the ubiquitin-binding domain of IKBKG/NEMO binds to polyubiquitinated IRAK1 bringing together the IRAK1-MAP3K7/TAK1-TRAF6 complex and the NEMO-IKKA-IKKB complex. In turn, MAP3K7/TAK1 activates IKKs (CHUK/IKKA and IKBKB/IKKB) leading to NF-kappa-B nuclear translocation and activation. Alternatively, phosphorylates TIRAP to promote its ubiquitination and subsequent degradation. Phosphorylates NCF1 and regulates NADPH oxidase activation after LPS stimulation suggesting a similar mechanism during microbial infections. The chain is Interleukin-1 receptor-associated kinase 4 (IRAK4) from Bos taurus (Bovine).